Reading from the N-terminus, the 306-residue chain is Oxygen-dependent coproporphyrinogen-III oxidase (306 aa).

Ser-99 contributes to the substrate binding site. Residues His-103 and His-113 each coordinate a divalent metal cation. The active-site Proton donor is His-113. 115–117 (NVR) is a binding site for substrate. Residues His-152 and His-182 each contribute to the a divalent metal cation site. The segment at 247–282 (YVEFNLVFDRGTLFGLQSGGRTESILMSMPPVANWR) is important for dimerization. Position 265–267 (265–267 (GGR)) interacts with substrate.

Belongs to the aerobic coproporphyrinogen-III oxidase family. Homodimer. The cofactor is a divalent metal cation.

The protein resides in the cytoplasm. The enzyme catalyses coproporphyrinogen III + O2 + 2 H(+) = protoporphyrinogen IX + 2 CO2 + 2 H2O. It functions in the pathway porphyrin-containing compound metabolism; protoporphyrin-IX biosynthesis; protoporphyrinogen-IX from coproporphyrinogen-III (O2 route): step 1/1. In terms of biological role, involved in the heme biosynthesis. Catalyzes the aerobic oxidative decarboxylation of propionate groups of rings A and B of coproporphyrinogen-III to yield the vinyl groups in protoporphyrinogen-IX. This chain is Oxygen-dependent coproporphyrinogen-III oxidase, found in Burkholderia ambifaria (strain MC40-6).